Consider the following 1198-residue polypeptide: Structural polyprotein (1198 aa).

Residues 2–15 (TKKPGGPGKNRAIN) form an interaction with host EXOC1 region. Residues 2–109 (TKKPGGPGKN…RKQNKRGGNE (108 aa)) are Cytoplasmic-facing. Residues 37–72 (LLDGRGPVRFVLALITFFKFTALAPTKALLGRWKAV) are hydrophobic; homodimerization of capsid protein C. A propeptide spans 106 to 127 (GGNEGSIMWLASLAVVIAYAGA) (ER anchor for the capsid protein C, removed in mature form by serine protease NS3). The helical transmembrane segment at 110 to 130 (GSIMWLASLAVVIAYAGAMKL) threads the bilayer. Residues 131–253 (SNFQGKLLMT…ATRYLMKTEN (123 aa)) are Extracellular-facing. N-linked (GlcNAc...) asparagine; by host glycosylation is present at N142. Residues 254–274 (WIIRNPGYAFLAATLGWMLGS) traverse the membrane as a helical segment. The Cytoplasmic segment spans residues 275–279 (NNGQR). Residues 280-294 (VVFTILLLLVAPAYS) traverse the membrane as a helical segment. Topologically, residues 295 to 746 (FNCLGMGNRD…QVFGGAFRTL (452 aa)) are extracellular. 6 disulfides stabilise this stretch: C297–C324, C354–C410, C354–C415, C368–C399, C386–C410, and C386–C415. Positions 392–405 (DRGWGNGCGLFGKG) are fusion peptide. N-linked (GlcNAc...) asparagine; by host glycosylation occurs at N448. 2 cysteine pairs are disulfide-bonded: C484–C581 and C598–C629. Residues 747 to 767 (FGGMSWITQGLMGALLLWMGV) traverse the membrane as a helical segment. Over 768-773 (NARDRS) the chain is Cytoplasmic. The chain crosses the membrane as a helical span at residues 774-794 (IALAFLATGGVLVFLATNVHA). At 795-1198 (DTGCAIDITR…CADAWGHHLH (404 aa)) the chain is on the extracellular side. Intrachain disulfides connect C798/C809, C849/C937, C973/C1017, C1074/C1123, C1085/C1106, and C1107/C1110. 2 N-linked (GlcNAc...) asparagine; by host glycosylation sites follow: N924 and N1001. Residues 1152–1177 (VDPFSAGPSGDVSGHPGGPSQEVDGQ) form a disordered region.

As to quaternary structure, homodimer. Interacts (via N-terminus) with host EXOC1 (via C-terminus); this interaction results in EXOC1 degradation through the proteasome degradation pathway. Interacts with host CAPRIN1; this interaction is involved in the suppression of the integrated stress response. In terms of assembly, forms heterodimers with envelope protein E in the endoplasmic reticulum and Golgi. Homodimer; in the endoplasmic reticulum and Golgi. Interacts with protein prM. Interacts with non-structural protein 1. Post-translationally, genome polyprotein: Specific enzymatic cleavages in vivo yield mature proteins. Cleavages in the lumen of endoplasmic reticulum are performed by host signal peptidase, whereas cleavages in the cytoplasmic side are performed by serine protease NS3. Signal cleavage at the 2K-4B site requires a prior NS3 protease-mediated cleavage at the 4A-2K site. Cleaved in post-Golgi vesicles by a host furin, releasing the mature small envelope protein M, and peptide pr. This cleavage is incomplete as up to 30% of viral particles still carry uncleaved prM. In terms of processing, N-glycosylated.

The protein localises to the secreted. It localises to the virion membrane. It is found in the host endoplasmic reticulum membrane. In terms of biological role, plays a role in virus budding by binding to the cell membrane and gathering the viral RNA into a nucleocapsid that forms the core of a mature virus particle. During virus entry, may induce genome penetration into the host cytoplasm after hemifusion induced by the surface proteins. Can migrate to the cell nucleus where it modulates host functions. Overcomes the anti-viral effects of host EXOC1 by sequestering and degrading the latter through the proteasome degradation pathway. Inhibits the integrated stress response (ISR) in the infected cell by binding to host CAPRIN1. Functionally, inhibits RNA silencing by interfering with host Dicer. Its function is as follows. Prevents premature fusion activity of envelope proteins in trans-Golgi by binding to envelope protein E at pH6.0. After virion release in extracellular space, gets dissociated from E dimers. Acts as a chaperone for envelope protein E during intracellular virion assembly by masking and inactivating envelope protein E fusion peptide. prM is the only viral peptide matured by host furin in the trans-Golgi network probably to avoid catastrophic activation of the viral fusion activity in acidic Golgi compartment prior to virion release. prM-E cleavage is inefficient, and many virions are only partially matured. These uncleaved prM would play a role in immune evasion. In terms of biological role, may play a role in virus budding. Exerts cytotoxic effects by activating a mitochondrial apoptotic pathway through M ectodomain. May display a viroporin activity. Functionally, binds to host cell surface receptor and mediates fusion between viral and cellular membranes. Envelope protein is synthesized in the endoplasmic reticulum in the form of heterodimer with protein prM. They play a role in virion budding in the ER, and the newly formed immature particle is covered with 60 spikes composed of heterodimer between precursor prM and envelope protein E. The virion is transported to the Golgi apparatus where the low pH causes dissociation of PrM-E heterodimers and formation of E homodimers. prM-E cleavage is inefficient, and many virions are only partially matured. These uncleaved prM would play a role in immune evasion. Its function is as follows. May play a role in neuroinvasiveness. This Japanese encephalitis virus (strain Jaoars982) (JEV) protein is Structural polyprotein.